The following is a 671-amino-acid chain: ATP-dependent zinc metalloprotease FtsH (671 aa).

The Cytoplasmic segment spans residues 1–22 (MANPNNNNDNKQNNNNNFFNDN). A helical membrane pass occupies residues 23–43 (PLLAFAIFSIVIILIFKSFVG). Over 44–130 (EGESLGTMMN…ISYEGVVGNG (87 aa)) the chain is Periplasmic. Residues 131 to 151 (FFSELISMMLPILIFFAIWIF) form a helical membrane-spanning segment. Residues 152–671 (LAKKMSKGMG…SEESDNNKEA (520 aa)) lie on the Cytoplasmic side of the membrane. 224-231 (GPPGTGKT) lines the ATP pocket. A Zn(2+)-binding site is contributed by H447. E448 is a catalytic residue. The Zn(2+) site is built by H451 and D525. The tract at residues 630–671 (EKGMPSRLAHKDKVAKNKAEADKKEEALKKEISEESDNNKEA) is disordered.

In the central section; belongs to the AAA ATPase family. The protein in the C-terminal section; belongs to the peptidase M41 family. As to quaternary structure, homohexamer. Zn(2+) is required as a cofactor.

It is found in the cell inner membrane. In terms of biological role, acts as a processive, ATP-dependent zinc metallopeptidase for both cytoplasmic and membrane proteins. Plays a role in the quality control of integral membrane proteins. In Sulfurovum sp. (strain NBC37-1), this protein is ATP-dependent zinc metalloprotease FtsH.